The following is a 240-amino-acid chain: Gas vesicle protein C (240 aa).

The span at 1–13 (MALKDKWQQDRIG) shows a compositional bias: basic and acidic residues. The segment at 1-20 (MALKDKWQQDRIGRQQGVQE) is disordered. 5 consecutive repeats follow at residues 18–50 (VQER…RQGF), 51–83 (VTGV…LENF), 84–116 (IQQL…LSEF), 117–149 (REDL…LAIF), and 150–207 (RQTL…LQDY). A 5 X 33 AA tandem repeats region spans residues 18 to 207 (VQERQQQVQT…GVFRAELQDY (190 aa)).

The protein belongs to the gas vesicle GvpC family.

The protein localises to the gas vesicle. In terms of biological role, confers stability, involved in shaping gas vesicles, hollow, gas filled proteinaceous nanostructures. During planktonic growth they allow positioning of the organism at a favorable depth for light or nutrient acquisition. This chain is Gas vesicle protein C, found in Planktothrix agardhii (Oscillatoria agardhii).